The sequence spans 319 residues: Biotin synthase (319 aa).

The Radical SAM core domain maps to 44 to 273 (IHGDGIDLCS…EAKIRLAGGR (230 aa)). Positions 62, 66, and 69 each coordinate [4Fe-4S] cluster. [2Fe-2S] cluster-binding residues include Ser-106, Cys-138, Cys-198, and Arg-268.

The protein belongs to the radical SAM superfamily. Biotin synthase family. Homodimer. [4Fe-4S] cluster is required as a cofactor. Requires [2Fe-2S] cluster as cofactor.

It carries out the reaction (4R,5S)-dethiobiotin + (sulfur carrier)-SH + 2 reduced [2Fe-2S]-[ferredoxin] + 2 S-adenosyl-L-methionine = (sulfur carrier)-H + biotin + 2 5'-deoxyadenosine + 2 L-methionine + 2 oxidized [2Fe-2S]-[ferredoxin]. It functions in the pathway cofactor biosynthesis; biotin biosynthesis; biotin from 7,8-diaminononanoate: step 2/2. Catalyzes the conversion of dethiobiotin (DTB) to biotin by the insertion of a sulfur atom into dethiobiotin via a radical-based mechanism. In Clostridium perfringens (strain ATCC 13124 / DSM 756 / JCM 1290 / NCIMB 6125 / NCTC 8237 / Type A), this protein is Biotin synthase.